The primary structure comprises 241 residues: Carboxy-S-adenosyl-L-methionine synthase (241 aa).

S-adenosyl-L-methionine contacts are provided by residues Tyr-38, 63–65 (GCS), 88–89 (DN), 116–117 (DI), Asn-131, and Arg-198.

The protein belongs to the class I-like SAM-binding methyltransferase superfamily. Cx-SAM synthase family. Homodimer.

The catalysed reaction is prephenate + S-adenosyl-L-methionine = carboxy-S-adenosyl-L-methionine + 3-phenylpyruvate + H2O. Catalyzes the conversion of S-adenosyl-L-methionine (SAM) to carboxy-S-adenosyl-L-methionine (Cx-SAM). In Pasteurella multocida (strain Pm70), this protein is Carboxy-S-adenosyl-L-methionine synthase.